The chain runs to 214 residues: Heat shock protein 30 (214 aa).

In terms of domain architecture, sHSP spans 66–183 (VPSSLTIQPV…AERVVPINCS (118 aa)). The tract at residues 193 to 214 (SKTEGSITDTQKKQENTISKED) is disordered. Positions 202 to 214 (TQKKQENTISKED) are enriched in basic and acidic residues.

The protein belongs to the small heat shock protein (HSP20) family.

This Oncorhynchus tshawytscha (Chinook salmon) protein is Heat shock protein 30 (hsp30).